The following is a 100-amino-acid chain: Dromyosuppressin (100 aa).

The first 24 residues, 1–24, serve as a signal peptide directing secretion; it reads MSFAQFFVACCLAIVLLAVSNTRA. Positions 25–84 are excised as a propeptide; it reads AVQGPPLCQSGIVEEMPPHIRKVCQALENSDQLTSALKSYINNEASALVANSDDLLKNYN. Phe-96 bears the Phenylalanine amide mark.

The protein belongs to the myosuppressin family.

It localises to the secreted. Functionally, myoinhibiting neuropeptide. The sequence is that of Dromyosuppressin from Drosophila melanogaster (Fruit fly).